The following is a 354-amino-acid chain: COP9 signalosome complex subunit 5 (354 aa).

The MPN domain maps to 56 to 193; it reads VLVSSIALVK…IGAFRTYPKD (138 aa). 3 residues coordinate Zn(2+): histidine 139, histidine 141, and aspartate 152. The JAMM motif motif lies at 139–152; sequence HSHPGYGCWLSGID. The disordered stretch occupies residues 193–212; the sequence is DYKPPKKATKQNQDQSVPLS.

It belongs to the peptidase M67A family. CSN5 subfamily. In terms of assembly, component of the COP9 signalosome (CSN) complex.

The protein localises to the cytoplasm. It localises to the nucleus. In terms of biological role, catalytic Component of the COP9 signalosome (CSN) complex that acts as an regulator of the ubiquitin (Ubl) conjugation pathway by mediating the deneddylation of the cullin subunit of SCF-type E3 ubiquitin-protein ligase complexes. This chain is COP9 signalosome complex subunit 5 (RRI1), found in Yarrowia lipolytica (strain CLIB 122 / E 150) (Yeast).